The chain runs to 480 residues: Altronate oxidoreductase (480 aa).

19-30 serves as a coordination point for NAD(+); the sequence is ILQFGEGNFLRG.

This sequence belongs to the mannitol dehydrogenase family. UxaB subfamily.

It catalyses the reaction D-altronate + NAD(+) = keto-D-tagaturonate + NADH + H(+). The protein operates within carbohydrate metabolism; pentose and glucuronate interconversion. The polypeptide is Altronate oxidoreductase (Bacillus subtilis (strain 168)).